The sequence spans 196 residues: Probable malonic semialdehyde reductase RutE (196 aa).

This sequence belongs to the nitroreductase family. HadB/RutE subfamily. FMN serves as cofactor.

It catalyses the reaction 3-hydroxypropanoate + NADP(+) = 3-oxopropanoate + NADPH + H(+). May reduce toxic product malonic semialdehyde to 3-hydroxypropionic acid, which is excreted. This is Probable malonic semialdehyde reductase RutE from Escherichia coli O7:K1 (strain IAI39 / ExPEC).